The sequence spans 149 residues: Arginine repressor (149 aa).

This sequence belongs to the ArgR family.

Its subcellular location is the cytoplasm. The protein operates within amino-acid biosynthesis; L-arginine biosynthesis [regulation]. Its function is as follows. Regulates arginine biosynthesis genes. This Shouchella clausii (strain KSM-K16) (Alkalihalobacillus clausii) protein is Arginine repressor.